Reading from the N-terminus, the 381-residue chain is 1-deoxy-D-xylulose 5-phosphate reductoisomerase (381 aa).

Residues threonine 10, glycine 11, serine 12, isoleucine 13, asparagine 38, and asparagine 121 each coordinate NADPH. Lysine 122 provides a ligand contact to 1-deoxy-D-xylulose 5-phosphate. Glutamate 123 lines the NADPH pocket. Aspartate 147 provides a ligand contact to Mn(2+). The 1-deoxy-D-xylulose 5-phosphate site is built by serine 148, glutamate 149, serine 173, and histidine 196. A Mn(2+)-binding site is contributed by glutamate 149. Glycine 202 is an NADPH binding site. 4 residues coordinate 1-deoxy-D-xylulose 5-phosphate: serine 209, asparagine 214, lysine 215, and glutamate 218. Glutamate 218 is a binding site for Mn(2+).

It belongs to the DXR family. It depends on Mg(2+) as a cofactor. Mn(2+) is required as a cofactor.

The catalysed reaction is 2-C-methyl-D-erythritol 4-phosphate + NADP(+) = 1-deoxy-D-xylulose 5-phosphate + NADPH + H(+). Its pathway is isoprenoid biosynthesis; isopentenyl diphosphate biosynthesis via DXP pathway; isopentenyl diphosphate from 1-deoxy-D-xylulose 5-phosphate: step 1/6. Its function is as follows. Catalyzes the NADPH-dependent rearrangement and reduction of 1-deoxy-D-xylulose-5-phosphate (DXP) to 2-C-methyl-D-erythritol 4-phosphate (MEP). In Alkaliphilus oremlandii (strain OhILAs) (Clostridium oremlandii (strain OhILAs)), this protein is 1-deoxy-D-xylulose 5-phosphate reductoisomerase.